Reading from the N-terminus, the 249-residue chain is Adenylate kinase (249 aa).

43–48 serves as a coordination point for ATP; it reads GAGKGT. Residues 63-92 form an NMP region; the sequence is ATGDMLRAQVAAKTALGVEAKKIMDQGGLV. AMP-binding positions include Thr64, Arg69, 90–92, 119–122, and Gln126; these read GLV and GFPR. The LID stretch occupies residues 160–197; the sequence is GRLVHPASGRSYHKLFNPPKKNMIDDITGEPLVQRSDD. ATP-binding positions include Arg161 and 170–171; that span reads SY. 2 residues coordinate AMP: Arg194 and Arg205. Gln233 is an ATP binding site.

This sequence belongs to the adenylate kinase family. AK2 subfamily. In terms of assembly, monomer.

The protein resides in the cytoplasm. It localises to the cytosol. It is found in the mitochondrion intermembrane space. It catalyses the reaction AMP + ATP = 2 ADP. Catalyzes the reversible transfer of the terminal phosphate group between ATP and AMP. Plays an important role in cellular energy homeostasis and in adenine nucleotide metabolism. Adenylate kinase activity is critical for regulation of the phosphate utilization and the AMP de novo biosynthesis pathways. This Scheffersomyces stipitis (strain ATCC 58785 / CBS 6054 / NBRC 10063 / NRRL Y-11545) (Yeast) protein is Adenylate kinase.